The primary structure comprises 166 residues: NAD(P)H-quinone oxidoreductase subunit I, chloroplastic (166 aa).

2 consecutive 4Fe-4S ferredoxin-type domains span residues Gly-55–Lys-84 and Leu-95–Glu-124. Residues Cys-64, Cys-67, Cys-70, Cys-74, Cys-104, Cys-107, Cys-110, and Cys-114 each coordinate [4Fe-4S] cluster.

The protein belongs to the complex I 23 kDa subunit family. NDH is composed of at least 16 different subunits, 5 of which are encoded in the nucleus. The cofactor is [4Fe-4S] cluster.

The protein resides in the plastid. It is found in the chloroplast thylakoid membrane. It catalyses the reaction a plastoquinone + NADH + (n+1) H(+)(in) = a plastoquinol + NAD(+) + n H(+)(out). The enzyme catalyses a plastoquinone + NADPH + (n+1) H(+)(in) = a plastoquinol + NADP(+) + n H(+)(out). Its function is as follows. NDH shuttles electrons from NAD(P)H:plastoquinone, via FMN and iron-sulfur (Fe-S) centers, to quinones in the photosynthetic chain and possibly in a chloroplast respiratory chain. The immediate electron acceptor for the enzyme in this species is believed to be plastoquinone. Couples the redox reaction to proton translocation, and thus conserves the redox energy in a proton gradient. The polypeptide is NAD(P)H-quinone oxidoreductase subunit I, chloroplastic (Pentanema britannica (British yellowhead)).